The sequence spans 522 residues: 2-isopropylmalate synthase (522 aa).

One can recognise a Pyruvate carboxyltransferase domain in the interval 5–267; sequence VIIFDTTLRD…ETGINAKEIH (263 aa). 4 residues coordinate Mn(2+): D14, H202, H204, and N238. Residues 392–522 are regulatory domain; that stretch reads QLQQLVVQSD…MQKNRELGGV (131 aa).

It belongs to the alpha-IPM synthase/homocitrate synthase family. LeuA type 1 subfamily. As to quaternary structure, homodimer. Mn(2+) serves as cofactor.

The protein localises to the cytoplasm. It catalyses the reaction 3-methyl-2-oxobutanoate + acetyl-CoA + H2O = (2S)-2-isopropylmalate + CoA + H(+). Its pathway is amino-acid biosynthesis; L-leucine biosynthesis; L-leucine from 3-methyl-2-oxobutanoate: step 1/4. In terms of biological role, catalyzes the condensation of the acetyl group of acetyl-CoA with 3-methyl-2-oxobutanoate (2-ketoisovalerate) to form 3-carboxy-3-hydroxy-4-methylpentanoate (2-isopropylmalate). This Shewanella baltica (strain OS223) protein is 2-isopropylmalate synthase.